We begin with the raw amino-acid sequence, 363 residues long: NAD(P)H-quinone oxidoreductase subunit 1, chloroplastic (363 aa).

The next 7 helical transmembrane spans lie at 30–50 (LVPILTLVVGITIGVLVIVWL), 98–118 (FSIGPSMAVISILLSYSVIPF), 129–149 (VGVFLWIAISSIAPIGLLMSG), 165–185 (AAQSISYEIPLTLCVLSISLL), 253–273 (FAFFYITSYFNLLVSSLFVTI), 303–323 (TTTELFITLAKTFFFLFISIT), and 336–356 (LLNLGWKFLLPISLGNLLLTT).

Belongs to the complex I subunit 1 family. In terms of assembly, NDH is composed of at least 16 different subunits, 5 of which are encoded in the nucleus.

The protein resides in the plastid. It localises to the chloroplast thylakoid membrane. The catalysed reaction is a plastoquinone + NADH + (n+1) H(+)(in) = a plastoquinol + NAD(+) + n H(+)(out). It carries out the reaction a plastoquinone + NADPH + (n+1) H(+)(in) = a plastoquinol + NADP(+) + n H(+)(out). Functionally, NDH shuttles electrons from NAD(P)H:plastoquinone, via FMN and iron-sulfur (Fe-S) centers, to quinones in the photosynthetic chain and possibly in a chloroplast respiratory chain. The immediate electron acceptor for the enzyme in this species is believed to be plastoquinone. Couples the redox reaction to proton translocation, and thus conserves the redox energy in a proton gradient. The sequence is that of NAD(P)H-quinone oxidoreductase subunit 1, chloroplastic from Pelargonium hortorum (Common geranium).